The chain runs to 520 residues: Cytochrome P450 monooxygenase oblB (520 aa).

A run of 3 helical transmembrane segments spans residues 17-37 (VAVISAGAFYLLNLVIYRLFL), 229-249 (LFMGLPWLIHVVRLIPVSILA), and 320-340 (IGTGTITTAGSLCFICYHIVV). C462 provides a ligand contact to heme.

The protein belongs to the cytochrome P450 family. Requires heme as cofactor.

The protein localises to the membrane. It functions in the pathway secondary metabolite biosynthesis; terpenoid biosynthesis. Cytochrome P450 monooxygenase; part of the gene cluster that mediates the biosynthesis of the sesterterpenes ophiobolins, fungal phytotoxins with potential anti-cancer activities. The first step of the pathway is performed by the sesterterpene synthase oblA that possesses both prenyl transferase and terpene cyclase activity, converting isopentenyl diphosphate and dimethylallyl diphosphate into geranylfarnesyl diphosphate (GFPP) and further converting GFPP into ophiobolin F, respectively. Other sesterterpenoids (C(25) terpenoids) are found as minor products of oblA. It is expected that ophiobolin F is then oxidized to ophiobolin A via ophiobolin C and ophiobolin B intermediates by the combined action of the cytochrome P450 monooxygenase oblB and the FAD-dependent oxidoreductase oblC. Although oblB catalyzes multistep oxygenations at C5 and C21/C7 in a relatively efficient manner, it is unable to convert ophiobolin F to ophiobolin C and produces instead several unexpected derivatives. The chain is Cytochrome P450 monooxygenase oblB from Aspergillus clavatus (strain ATCC 1007 / CBS 513.65 / DSM 816 / NCTC 3887 / NRRL 1 / QM 1276 / 107).